A 325-amino-acid polypeptide reads, in one-letter code: Putative HTH-type transcriptional regulatory protein MK1005 (325 aa).

Residues 128-190 (VDELDVSRVR…FERRVAELLE (63 aa)) enclose the HTH cro/C1-type domain. Positions 139 to 158 (RQLRREGGRITLARAEEADV) form a DNA-binding region, H-T-H motif.

This chain is Putative HTH-type transcriptional regulatory protein MK1005, found in Methanopyrus kandleri (strain AV19 / DSM 6324 / JCM 9639 / NBRC 100938).